The chain runs to 148 residues: Ribosomal RNA large subunit methyltransferase H 2 (148 aa).

Residues Leu-74, Gly-106, and Phe-125 to Phe-130 contribute to the S-adenosyl-L-methionine site.

Belongs to the RNA methyltransferase RlmH family. Homodimer.

The protein resides in the cytoplasm. The enzyme catalyses pseudouridine(1915) in 23S rRNA + S-adenosyl-L-methionine = N(3)-methylpseudouridine(1915) in 23S rRNA + S-adenosyl-L-homocysteine + H(+). In terms of biological role, specifically methylates the pseudouridine at position 1915 (m3Psi1915) in 23S rRNA. The sequence is that of Ribosomal RNA large subunit methyltransferase H 2 from Caldanaerobacter subterraneus subsp. tengcongensis (strain DSM 15242 / JCM 11007 / NBRC 100824 / MB4) (Thermoanaerobacter tengcongensis).